The chain runs to 62 residues: UPF0291 protein CLM_2971 (62 aa).

Belongs to the UPF0291 family.

Its subcellular location is the cytoplasm. This is UPF0291 protein CLM_2971 from Clostridium botulinum (strain Kyoto / Type A2).